The primary structure comprises 194 residues: Dephospho-CoA kinase (194 aa).

A DPCK domain is found at 3 to 194; that stretch reads IVGLTGSIGM…RAIVDDLRAG (192 aa). 11–16 serves as a coordination point for ATP; it reads GMGKST.

It belongs to the CoaE family.

The protein localises to the cytoplasm. The catalysed reaction is 3'-dephospho-CoA + ATP = ADP + CoA + H(+). Its pathway is cofactor biosynthesis; coenzyme A biosynthesis; CoA from (R)-pantothenate: step 5/5. In terms of biological role, catalyzes the phosphorylation of the 3'-hydroxyl group of dephosphocoenzyme A to form coenzyme A. This is Dephospho-CoA kinase from Rhizobium meliloti (strain 1021) (Ensifer meliloti).